Reading from the N-terminus, the 450-residue chain is 3',5'-cyclic-AMP phosphodiesterase 7B (450 aa).

The 324-residue stretch at 97-420 folds into the PDEase domain; that stretch reads LDEDYLGQAR…AQWKSLLPRQ (324 aa). Histidine 173 (proton donor) is an active-site residue. A divalent metal cation is bound by residues histidine 177, histidine 213, aspartate 214, and aspartate 323. Residues 418 to 450 form a disordered region; that stretch reads PRQHRSRGSSGSGPDHDHAGQGTESEEQEGDSP. At serine 426 the chain carries Phosphoserine. The segment covering 441–450 has biased composition (acidic residues); that stretch reads ESEEQEGDSP.

The protein belongs to the cyclic nucleotide phosphodiesterase family. PDE7 subfamily. It depends on a divalent metal cation as a cofactor. As to expression, highly expressed in brain. Also expressed in heart, liver, skeletal muscle and pancreas.

It carries out the reaction 3',5'-cyclic AMP + H2O = AMP + H(+). Its pathway is purine metabolism; 3',5'-cyclic AMP degradation; AMP from 3',5'-cyclic AMP: step 1/1. Its activity is regulated as follows. Inhibited by dipyridamole, IBMX and SCH 51866. Insensitive to zaprinast, rolipram, and milrinone. Its function is as follows. Hydrolyzes the second messenger cAMP, which is a key regulator of many important physiological processes. May be involved in the control of cAMP-mediated neural activity and cAMP metabolism in the brain. This Homo sapiens (Human) protein is 3',5'-cyclic-AMP phosphodiesterase 7B.